A 189-amino-acid chain; its full sequence is Protein GrpE (189 aa).

The segment covering 1–10 (MADEQQQTLD) has biased composition (polar residues). Residues 1–21 (MADEQQQTLDPQAPEQTDAPE) form a disordered region.

Belongs to the GrpE family. As to quaternary structure, homodimer.

The protein resides in the cytoplasm. Participates actively in the response to hyperosmotic and heat shock by preventing the aggregation of stress-denatured proteins, in association with DnaK and GrpE. It is the nucleotide exchange factor for DnaK and may function as a thermosensor. Unfolded proteins bind initially to DnaJ; upon interaction with the DnaJ-bound protein, DnaK hydrolyzes its bound ATP, resulting in the formation of a stable complex. GrpE releases ADP from DnaK; ATP binding to DnaK triggers the release of the substrate protein, thus completing the reaction cycle. Several rounds of ATP-dependent interactions between DnaJ, DnaK and GrpE are required for fully efficient folding. This is Protein GrpE from Pseudomonas paraeruginosa (strain DSM 24068 / PA7) (Pseudomonas aeruginosa (strain PA7)).